The primary structure comprises 1262 residues: Isoleucine--tRNA ligase, cytoplasmic (1262 aa).

An N-acetylmethionine modification is found at M1. The 'HIGH' region motif lies at P48 to H58. Residues K600–R604 carry the 'KMSKS' region motif. An ATP-binding site is contributed by K603. S1049 is modified (phosphoserine). A Phosphothreonine modification is found at T1058.

Belongs to the class-I aminoacyl-tRNA synthetase family. As to quaternary structure, part of a multisubunit complex that groups tRNA ligases for Arg (RARS1), Asp (DARS1), Gln (QARS1), Ile (IARS1), Leu (LARS1), Lys (KARS1), Met (MARS1) the bifunctional ligase for Glu and Pro (EPRS1) and the auxiliary subunits AIMP1/p43, AIMP2/p38 and EEF1E1/p18.

It localises to the cytoplasm. The protein localises to the cytosol. The enzyme catalyses tRNA(Ile) + L-isoleucine + ATP = L-isoleucyl-tRNA(Ile) + AMP + diphosphate. Functionally, catalyzes the specific attachment of an amino acid to its cognate tRNA in a 2 step reaction: the amino acid (AA) is first activated by ATP to form AA-AMP and then transferred to the acceptor end of the tRNA. The sequence is that of Isoleucine--tRNA ligase, cytoplasmic (Iars1) from Mus musculus (Mouse).